Consider the following 466-residue polypeptide: Soluble pyridine nucleotide transhydrogenase (466 aa).

Residue 36–45 (ERYQNVGGGC) participates in FAD binding.

Belongs to the class-I pyridine nucleotide-disulfide oxidoreductase family. Requires FAD as cofactor.

It localises to the cytoplasm. It catalyses the reaction NAD(+) + NADPH = NADH + NADP(+). Functionally, conversion of NADPH, generated by peripheral catabolic pathways, to NADH, which can enter the respiratory chain for energy generation. This is Soluble pyridine nucleotide transhydrogenase from Escherichia coli O81 (strain ED1a).